Reading from the N-terminus, the 317-residue chain is Inositol oxygenase 2 (317 aa).

Substrate-binding positions include Arg57 and 115 to 117; that span reads DES. Fe cation-binding residues include His128, His153, and Asp154. Substrate is bound by residues Lys157 and 174–175; that span reads GD. Fe cation is bound by residues His226, His252, and Asp285. Residue 252–253 coordinates substrate; it reads HS.

The protein belongs to the myo-inositol oxygenase family. Fe cation serves as cofactor. Expressed mainly in roots, stems, flowers and siliques. Low expression in leaves.

It localises to the cytoplasm. The catalysed reaction is myo-inositol + O2 = D-glucuronate + H2O + H(+). Its pathway is polyol metabolism; myo-inositol degradation into D-glucuronate; D-glucuronate from myo-inositol: step 1/1. Involved in the biosynthesis of UDP-glucuronic acid (UDP-GlcA), providing nucleotide sugars for cell-wall polymers. May be also involved in plant ascorbate biosynthesis. In Arabidopsis thaliana (Mouse-ear cress), this protein is Inositol oxygenase 2 (MIOX2).